An 857-amino-acid polypeptide reads, in one-letter code: MALPSSSLSSQIHTGATTQCIPHFHGSLNAGTSAGKRRSLYLRWGKDNQAKKFGPSKIVACAGQDPFSVPTLVKREFPPGFWKDHVIESLMPSYKVAPSDEKRIETLITEIKNMFRSMGYGETNPSAYDTAWVARIPAVDGSEKPQFPETLEWILQNQLKDGSWGEEFYFLAYDRILATLACIITLTIWQTGDTQVQKGIEFFKTQAGKIEEEADSHRPSGFEIVFPAMLKEAKALGLDLPYELPFIQQIIEKREAKLQRLPPDLLYALPTTLLYSLEGLQEIVDWEKIMKLQSKDGSFLSSPASTAAVFMRTGNKKCLEFLNFVLKKFGNHVPCHYPLDLFERLWAVDTVERLGIDHHFKEEIKDALDYVYSHWDERGIGWARENPVPDIDDTAMGLRILRLHGYNVSSDVLKTFRDENGEFFCFLGQTQRGVTDMLNVNRCSHVAFPGETIMEEAKLCTERYLRNALEDTGAFDKWALKKNIRGEVEYALKYPWHRSMPRLEARSYIENYGPNDVWLGKTMYMMPNISNEKYLELAKLDFNRVQFFHRQELQDIRRWWNSSGFSQLGFTRERVAEIYFSPASFLFEPEFATCRAVYTKTSNFTVILDDLYDAHGTLDNLKLFSESVKRWDLSLVDQMPQDMKICFKGFYNTFNEIAEEGRKRQGRDVLSYIQKVWEVQLEAYTKEAEWSAVRYVPSYDEYIGNASVSIALGTVVLISALFTGEILTDDILSKIGRDSRFLYLMGLTGRLVNDTKTYQAERGQGEVASAVQCYMKDHPEISEEEALKHVYTIMDNALDELNREFVNNRDVPDTCRRLVFETARIMQLFYMDGDGLTLSHNMEIKEHVKNCLFQPVA.

A chloroplast-targeting transit peptide spans 1–33 (MALPSSSLSSQIHTGATTQCIPHFHGSLNAGTS). Lys257 contributes to the substrate binding site. Positions 390 and 392 each coordinate Mg(2+). Positions 390 to 393 (DIDD) match the DXDD motif motif. A substrate-binding site is contributed by Lys477. Residues Asp609, Asp613, Asn753, Thr757, and Glu761 each contribute to the Mg(2+) site. A DDXXD motif motif is present at residues 609-613 (DDLYD).

It belongs to the terpene synthase family. Tpsd subfamily. Mg(2+) serves as cofactor.

It localises to the plastid. It is found in the chloroplast. It catalyses the reaction (2E,6E,10E)-geranylgeranyl diphosphate = (+)-copalyl diphosphate. It carries out the reaction (+)-copalyl diphosphate = abieta-7,13-diene + diphosphate. The catalysed reaction is (+)-copalyl diphosphate = abieta-8(14),12-diene + diphosphate. The enzyme catalyses (+)-copalyl diphosphate = neoabietadiene + diphosphate. It participates in terpene metabolism; oleoresin biosynthesis. Its function is as follows. Involved in defensive oleoresin formation in conifers in response to insect attack or other injury. Involved in diterpene (C20) olefins biosynthesis. Bifunctional enzyme that catalyzes two sequential cyclizations of geranylgeranyl diphosphate (GGPP) to levopimaradiene. Levopimaradiene is the major products of the enzyme with abietadiene and neoabietadiene. No activity with farnesyl diphosphate (FPP) as substrate. In Pinus banksiana (Jack pine), this protein is Bifunctional levopimaradiene synthase, chloroplastic.